We begin with the raw amino-acid sequence, 474 residues long: Serine--tRNA ligase (474 aa).

278 to 280 contributes to the L-serine binding site; the sequence is TAE. 309-311 provides a ligand contact to ATP; the sequence is RSE. E332 is an L-serine binding site. 396-399 provides a ligand contact to ATP; the sequence is EISS. S432 is an L-serine binding site.

This sequence belongs to the class-II aminoacyl-tRNA synthetase family. Type-1 seryl-tRNA synthetase subfamily. In terms of assembly, homodimer. The tRNA molecule binds across the dimer.

Its subcellular location is the cytoplasm. It catalyses the reaction tRNA(Ser) + L-serine + ATP = L-seryl-tRNA(Ser) + AMP + diphosphate + H(+). The enzyme catalyses tRNA(Sec) + L-serine + ATP = L-seryl-tRNA(Sec) + AMP + diphosphate + H(+). It functions in the pathway aminoacyl-tRNA biosynthesis; selenocysteinyl-tRNA(Sec) biosynthesis; L-seryl-tRNA(Sec) from L-serine and tRNA(Sec): step 1/1. Functionally, catalyzes the attachment of serine to tRNA(Ser). Is also able to aminoacylate tRNA(Sec) with serine, to form the misacylated tRNA L-seryl-tRNA(Sec), which will be further converted into selenocysteinyl-tRNA(Sec). In Caulobacter sp. (strain K31), this protein is Serine--tRNA ligase.